The primary structure comprises 118 residues: DPLYTKFVSLVKSDPVIHTLLPLSPKGEICDINGVCVDAAEDEFFRLTTKEGKLTVERDVVRTKTTDYSPILQFEQDPVQILDALLPLYLNSQILRALQESLASELAARMSAMSNAAA.

C30 and C36 are joined by a disulfide.

This sequence belongs to the ATPase gamma chain family. F-type ATPases have 2 components, CF(1) - the catalytic core - and CF(0) - the membrane proton channel. CF(1) has five subunits: alpha(3), beta(3), gamma(1), delta(1), epsilon(1). CF(0) has four main subunits: a, b, b' and c.

It is found in the plastid. The protein localises to the chloroplast thylakoid membrane. Produces ATP from ADP in the presence of a proton gradient across the membrane. The gamma chain is believed to be important in regulating ATPase activity and the flow of protons through the CF(0) complex. Functionally, inceptin is a proteolytic fragment produced by insect larvae that previously ingested the protein. This peptide mediate plant perception of herbivory through the induction of volatile, phenylpropanoid and protease inhibitor defenses such as ethylene, jasmonic acid and salicylic acid for example. This Vigna unguiculata (Cowpea) protein is ATP synthase subunit gamma, chloroplastic.